The sequence spans 108 residues: UPF0145 protein LACR_1006 (108 aa).

The protein belongs to the UPF0145 family.

The protein is UPF0145 protein LACR_1006 of Lactococcus lactis subsp. cremoris (strain SK11).